The following is a 127-amino-acid chain: Small ribosomal subunit protein uS12 (127 aa).

Positions 1 to 28 are disordered; that stretch reads MPTIQQLIRDERSKAKRKTKSPALKQCP. A 3-methylthioaspartic acid modification is found at D89. The tract at residues 104 to 127 is disordered; that stretch reads ATGVKNRQKARSKYGTKRPKPAAK. Basic residues predominate over residues 109–127; sequence NRQKARSKYGTKRPKPAAK.

This sequence belongs to the universal ribosomal protein uS12 family. As to quaternary structure, part of the 30S ribosomal subunit. Contacts proteins S8 and S17. May interact with IF1 in the 30S initiation complex.

Its function is as follows. With S4 and S5 plays an important role in translational accuracy. Functionally, interacts with and stabilizes bases of the 16S rRNA that are involved in tRNA selection in the A site and with the mRNA backbone. Located at the interface of the 30S and 50S subunits, it traverses the body of the 30S subunit contacting proteins on the other side and probably holding the rRNA structure together. The combined cluster of proteins S8, S12 and S17 appears to hold together the shoulder and platform of the 30S subunit. This chain is Small ribosomal subunit protein uS12, found in Microcystis aeruginosa (strain NIES-843 / IAM M-2473).